The following is a 250-amino-acid chain: Small ribosomal subunit protein uS3 (250 aa).

Positions 39–111 (IRTLIKNHYP…KVQINIFEVK (73 aa)) constitute a KH type-2 domain.

Belongs to the universal ribosomal protein uS3 family. In terms of assembly, part of the 30S ribosomal subunit. Forms a tight complex with proteins S10 and S14.

Binds the lower part of the 30S subunit head. Binds mRNA in the 70S ribosome, positioning it for translation. The sequence is that of Small ribosomal subunit protein uS3 from Phytoplasma vitis (Flavescence doree phytoplasma).